A 190-amino-acid polypeptide reads, in one-letter code: Putative glutathione-dependent formaldehyde-activating enzyme (190 aa).

The CENP-V/GFA domain maps to 19–165 (FKGGKLYCHC…FRKVGLQPYD (147 aa)). Residues Cys26, Cys28, Cys47, Cys49, Cys52, Cys94, and Cys97 each contribute to the Zn(2+) site.

The protein belongs to the Gfa family. Zn(2+) is required as a cofactor.

It catalyses the reaction S-(hydroxymethyl)glutathione = glutathione + formaldehyde. It participates in one-carbon metabolism; formaldehyde degradation; formate from formaldehyde (glutathione route): step 1/3. Functionally, catalyzes the condensation of formaldehyde and glutathione to S-hydroxymethylglutathione. This Pyrenophora teres f. teres (strain 0-1) (Barley net blotch fungus) protein is Putative glutathione-dependent formaldehyde-activating enzyme.